A 154-amino-acid polypeptide reads, in one-letter code: Endoribonuclease YbeY (154 aa).

Residues histidine 116, histidine 120, and histidine 126 each contribute to the Zn(2+) site.

The protein belongs to the endoribonuclease YbeY family. Zn(2+) is required as a cofactor.

Its subcellular location is the cytoplasm. Its function is as follows. Single strand-specific metallo-endoribonuclease involved in late-stage 70S ribosome quality control and in maturation of the 3' terminus of the 16S rRNA. This chain is Endoribonuclease YbeY, found in Buchnera aphidicola subsp. Baizongia pistaciae (strain Bp).